The chain runs to 669 residues: Zinc finger CCCH domain-containing protein 17 (669 aa).

The span at 1–11 (MFAPATQPQQQ) shows a compositional bias: low complexity. Residues 1-23 (MFAPATQPQQQHEQKKQSETVSS) form a disordered region. 3 consecutive C3H1-type zinc fingers follow at residues 34-58 (DCVYFLASPLTCKKGPECEYRHSEY), 60-86 (RMNPRDCYYWLNGNCLNPKCGFRHPPL), and 114-141 (AKQPVPCLFFQKGMCMKGDMCSFLHTPN). Disordered regions lie at residues 150–175 (PVEAKPATDPQCSKKPIENNTEEKKL), 285–306 (VEDRYGRRSQERGNSEYDPDFS), 376–589 (GMRL…VMEE), and 642–669 (EEGEEEATEGGEGEGEEDIEKKTVEMLS). 6 stretches are compositionally biased toward basic and acidic residues: residues 164–175 (KPIENNTEEKKL), 285–299 (VEDRYGRRSQERGNS), 392–406 (SMDRGYRESRRDTPR), 420–464 (KLRE…EENH), 478–499 (RRREMEDERKSAPKSSREESKP), and 547–579 (NNKDETISKEEAGDEIKLITEEKTEVVSEPKAE). Acidic residues-rich tracts occupy residues 580-589 (VEEEGTVMEE) and 642-659 (EEGEEEATEGGEGEGEED). A compositionally biased stretch (basic and acidic residues) spans 660–669 (IEKKTVEMLS).

The protein is Zinc finger CCCH domain-containing protein 17 of Arabidopsis thaliana (Mouse-ear cress).